The sequence spans 238 residues: MKLTPKELDKLMLHYAGELARKRKEKGIKLNYVEAVALISAHIMEEARAGKKTAAELMQEGRTLLKPDDVMDGVASMIHEVGIEAMFPDGTKLVTVHTPIEANGKLVPGELFLKNEDITINEGKKAVSVKVKNVGDRPVQIGSHFHFFEVNRCLDFDREKTFGKRLDIASGTAVRFEPGEEKSVELIDIGGNRRIFGFNALVDRQADNESKKIALHRAKERGFHGAKSDDNYVKTIKE.

The segment at 1–102 is urease gamma; that stretch reads MKLTPKELDK…LVTVHTPIEA (102 aa). Positions 103-238 are urease beta; the sequence is NGKLVPGELF…DDNYVKTIKE (136 aa).

In the N-terminal section; belongs to the urease gamma subunit family. The protein in the C-terminal section; belongs to the urease beta subunit family. In terms of assembly, heterohexamer of 3 UreA (alpha) and 3 UreB (beta) subunits. Four heterohexamers assemble to form a 16 nm dodecameric complex.

The catalysed reaction is urea + 2 H2O + H(+) = hydrogencarbonate + 2 NH4(+). Its pathway is nitrogen metabolism; urea degradation; CO(2) and NH(3) from urea (urease route): step 1/1. The protein is Urease subunit alpha of Helicobacter pylori (strain J99 / ATCC 700824) (Campylobacter pylori J99).